Reading from the N-terminus, the 858-residue chain is Respiratory burst oxidase homolog protein D (858 aa).

The segment covering 1 to 13 (MQNPEDHHSDREL) has biased composition (basic and acidic residues). Residues 1–27 (MQNPEDHHSDRELSSPSNTTKSNDDKN) are disordered. Residues 1–318 (MQNPEDHHSD…KYFLLDNWRR (318 aa)) are Cytoplasmic-facing. EF-hand-like stretches follow at residues 134 to 144 (TATSDSLLPRA) and 171 to 182 (RNITSGCISKEQ). 2 consecutive EF-hand domains span residues 194–229 (SFDSRLRTFFDMVDKDADGRLTEEEVREIICLSASA) and 238–273 (QAAEYAALIMEELDRDQKGYIMLENLEMLLLEAPIQ). Ca(2+) is bound by residues Asp207, Asp209, Asp211, Arg213, and Glu218. Residues 319-339 (VWVLLLWIGVMAGLFAYKYVQ) traverse the membrane as a helical segment. Residues 340–351 (YKNKAAFNVMGH) lie on the Extracellular side of the membrane. Residues 352 to 372 (CVCVAKGAAEVLKLNMALILL) traverse the membrane as a helical segment. A Ferric oxidoreductase domain is found at 357–514 (KGAAEVLKLN…LFVIVYSLLI (158 aa)). Topologically, residues 373–397 (PVCRNTITWLRNKTKLGGAVPFDDN) are cytoplasmic. The helical transmembrane segment at 398–418 (INFHKVVAGAIAVGVGIHVLA) threads the bilayer. The Extracellular portion of the chain corresponds to 419 to 454 (HMTCDFPRLLNASPEKYKPMEPYFGDQPRNYWHFVK). A helical membrane pass occupies residues 455-475 (GVEGVSGIIMVVLMSIAFTLA). Residues 476–497 (SQRFRRNKIRLPRPLNKLTGFN) lie on the Cytoplasmic side of the membrane. Residues 498–518 (AFWYSHHLFVIVYSLLIVHGI) form a helical membrane-spanning segment. Over 519–675 (ELYLTKEWYK…APAQDYKEYE (157 aa)) the chain is Extracellular. Residues 548 to 670 (LRAFRSSVKD…DGPYGAPAQD (123 aa)) enclose the FAD-binding FR-type domain. Residues 676–696 (VLLLVGLGIGATPMISIVKDI) traverse the membrane as a helical segment. Topologically, residues 697-858 (VNNMKEEKYD…TKFDFHKENF (162 aa)) are cytoplasmic.

This sequence belongs to the RBOH (TC 5.B.1.3) family. Monomer and homodimer. In terms of processing, phosphorylated by CPK. In terms of tissue distribution, expressed in leaves.

Its subcellular location is the membrane. Functionally, calcium-dependent NADPH oxidase that generates superoxide. May be responsible for the oxidative burst in response to pathogen attack in the leaves. The sequence is that of Respiratory burst oxidase homolog protein D (RBOHD) from Solanum tuberosum (Potato).